Consider the following 416-residue polypeptide: Exodeoxyribonuclease 7 large subunit (416 aa).

It belongs to the XseA family. In terms of assembly, heterooligomer composed of large and small subunits.

The protein localises to the cytoplasm. The catalysed reaction is Exonucleolytic cleavage in either 5'- to 3'- or 3'- to 5'-direction to yield nucleoside 5'-phosphates.. In terms of biological role, bidirectionally degrades single-stranded DNA into large acid-insoluble oligonucleotides, which are then degraded further into small acid-soluble oligonucleotides. The chain is Exodeoxyribonuclease 7 large subunit from Acidothermus cellulolyticus (strain ATCC 43068 / DSM 8971 / 11B).